We begin with the raw amino-acid sequence, 155 residues long: Ribosome maturation factor RimP (155 aa).

It belongs to the RimP family.

The protein resides in the cytoplasm. Required for maturation of 30S ribosomal subunits. In Prochlorococcus marinus (strain SARG / CCMP1375 / SS120), this protein is Ribosome maturation factor RimP.